The sequence spans 315 residues: DNA-directed RNA polymerase subunit alpha (315 aa).

Residues 1 to 228 (MIEIEKPKIE…EHLNLFIDLS (228 aa)) form an alpha N-terminal domain (alpha-NTD) region. An alpha C-terminal domain (alpha-CTD) region spans residues 245-315 (KEKVLEMTIE…LGLSLAPSED (71 aa)).

This sequence belongs to the RNA polymerase alpha chain family. In terms of assembly, homodimer. The RNAP catalytic core consists of 2 alpha, 1 beta, 1 beta' and 1 omega subunit. When a sigma factor is associated with the core the holoenzyme is formed, which can initiate transcription.

It catalyses the reaction RNA(n) + a ribonucleoside 5'-triphosphate = RNA(n+1) + diphosphate. Its function is as follows. DNA-dependent RNA polymerase catalyzes the transcription of DNA into RNA using the four ribonucleoside triphosphates as substrates. The polypeptide is DNA-directed RNA polymerase subunit alpha (Acetivibrio thermocellus (strain ATCC 27405 / DSM 1237 / JCM 9322 / NBRC 103400 / NCIMB 10682 / NRRL B-4536 / VPI 7372) (Clostridium thermocellum)).